The primary structure comprises 344 residues: GTP 3',8-cyclase (344 aa).

The Radical SAM core domain occupies P19–A245. R28 serves as a coordination point for GTP. Residues C35 and C39 each coordinate [4Fe-4S] cluster. Position 41 (Y41) interacts with S-adenosyl-L-methionine. A [4Fe-4S] cluster-binding site is contributed by C42. R77 serves as a coordination point for GTP. Position 81 (G81) interacts with S-adenosyl-L-methionine. GTP is bound at residue T111. Residue S135 coordinates S-adenosyl-L-methionine. K171 provides a ligand contact to GTP. M205 contributes to the S-adenosyl-L-methionine binding site. Residues C268 and C271 each coordinate [4Fe-4S] cluster. R273–R275 is a GTP binding site. [4Fe-4S] cluster is bound at residue C285.

The protein belongs to the radical SAM superfamily. MoaA family. Monomer and homodimer. The cofactor is [4Fe-4S] cluster.

It catalyses the reaction GTP + AH2 + S-adenosyl-L-methionine = (8S)-3',8-cyclo-7,8-dihydroguanosine 5'-triphosphate + 5'-deoxyadenosine + L-methionine + A + H(+). It participates in cofactor biosynthesis; molybdopterin biosynthesis. Its function is as follows. Catalyzes the cyclization of GTP to (8S)-3',8-cyclo-7,8-dihydroguanosine 5'-triphosphate. The polypeptide is GTP 3',8-cyclase (Brucella abortus (strain S19)).